We begin with the raw amino-acid sequence, 300 residues long: Recombination-associated protein RdgC (300 aa).

Belongs to the RdgC family.

The protein resides in the cytoplasm. It localises to the nucleoid. Functionally, may be involved in recombination. The protein is Recombination-associated protein RdgC of Janthinobacterium sp. (strain Marseille) (Minibacterium massiliensis).